A 525-amino-acid polypeptide reads, in one-letter code: MTTFRELGLSDSLLQSVESMGFEEATPIQAETIPHALQGKDIIGQAQTGTGKTAAFGLPLLDKVDTHKESVQGIVIAPTRELAIQVGEELYKIGKHKRVRILPIYGGQDINRQIRALKKHPHIIVGTPGRILDHINRKTLRLQNVETVVLDEADEMLNMGFIEDIEAILTDVPETHQTLLFSATMPDPIRRIAERFMTEPQHIKVKAKEVTMPNIQQFYLEVQEKKKFDVLTRLLDIQSPELAIVFGRTKRRVDELSEALNLRGYAAEGIHGDLTQAKRMSVLRKFKEGSIEVLVATDVAARGLDISGVTHVYNFDIPQDPESYVHRIGRTGRAGKKGIAMLFVTPRESGQLKNIERTTKRKMDRMDAPTLDEALEGQQRLIAEKLQNTIENENLAYYKRIAEEMLEENDSVTVVAAALKMMTKEPDTTPIALTSEPPVVARGGGSKKRGGNGGGYRDGNRNRSRDGRGGDGRNRDRNRDGRNRDGNRDRNRDGGNRGRRGEGQGRPGSSNGRGERKHHSRKPQA.

The Q motif motif lies at 2-30; it reads TTFRELGLSDSLLQSVESMGFEEATPIQA. Residues 33-203 enclose the Helicase ATP-binding domain; it reads IPHALQGKDI…ERFMTEPQHI (171 aa). 46 to 53 lines the ATP pocket; it reads AQTGTGKT. The DEAD box motif lies at 151–154; it reads DEAD. The Helicase C-terminal domain maps to 214–374; that stretch reads NIQQFYLEVQ…RMDAPTLDEA (161 aa). Residues 428-525 are disordered; that stretch reads TTPIALTSEP…RKHHSRKPQA (98 aa). Over residues 458 to 503 the composition is skewed to basic and acidic residues; sequence DGNRNRSRDGRGGDGRNRDRNRDGRNRDGNRDRNRDGGNRGRRGEG. Residues 515-525 are compositionally biased toward basic residues; the sequence is ERKHHSRKPQA.

This sequence belongs to the DEAD box helicase family. CshA subfamily. As to quaternary structure, oligomerizes, may be a member of the RNA degradosome.

Its subcellular location is the cytoplasm. The enzyme catalyses ATP + H2O = ADP + phosphate + H(+). Functionally, DEAD-box RNA helicase possibly involved in RNA degradation. Unwinds dsRNA in both 5'- and 3'-directions, has RNA-dependent ATPase activity. The protein is DEAD-box ATP-dependent RNA helicase CshA of Bacillus cereus (strain ATCC 10987 / NRS 248).